The following is a 316-amino-acid chain: Actinorhodin polyketide synthase bifunctional cyclase/dehydratase (316 aa).

It functions in the pathway antibiotic biosynthesis; actinorhodin biosynthesis. Its function is as follows. Is needed for correct cyclization of the oligoketide leading to isochromanequinone formation. In Streptomyces coelicolor (strain ATCC BAA-471 / A3(2) / M145), this protein is Actinorhodin polyketide synthase bifunctional cyclase/dehydratase.